Reading from the N-terminus, the 466-residue chain is Muscarinic acetylcholine receptor M2 (466 aa).

Residues 1–22 (MNNSTNSSNNGLAITSPYKTFE) are Extracellular-facing. 3 N-linked (GlcNAc...) asparagine glycosylation sites follow: N2, N3, and N6. Residues 23 to 45 (VVFIVLVAGSLSLVTIIGNILVM) form a helical membrane-spanning segment. At 46-59 (VSIKVNRHLQTVNN) the chain is on the cytoplasmic side. A helical transmembrane segment spans residues 60-80 (YFLFSLACADLIIGVFSMNLY). The Extracellular segment spans residues 81–97 (TLYTVIGYWPLGPVVCD). C96 and C176 are disulfide-bonded. Residues 98–119 (LWLALDYVVSNASVMNLLIISF) traverse the membrane as a helical segment. The short motif at 120-122 (DRY) is the Important for signaling element. Residues 120 to 139 (DRYFCVTKPLTYPVKRTTKM) are Cytoplasmic-facing. The helical transmembrane segment at 140–162 (AGMMIAAAWVLSFILWAPAILFW) threads the bilayer. Residues 163-184 (QFIVGVRTVEDGECYIQFFSNA) are Extracellular-facing. A helical membrane pass occupies residues 185–209 (AVTFGTAIAAFYLPVIIMTVLYWHI). Topologically, residues 210-387 (SRASKSRIKK…PPSREKKVTR (178 aa)) are cytoplasmic. Positions 218–320 (KKEKKEPVAN…SLGHSKDDNS (103 aa)) are disordered. S232 carries the post-translational modification Phosphoserine. Over residues 254–270 (GLEHNKIQNGKAPRDGG) the composition is skewed to basic and acidic residues. 2 stretches are compositionally biased toward polar residues: residues 284-293 (NDSTSVSAVA) and 304-313 (DENTVSTSLG). Residues 388-410 (TILAILLAFIITWAPYNVMVLIN) form a helical membrane-spanning segment. The Extracellular portion of the chain corresponds to 411–418 (TFCAPCIP). C413 and C416 are disulfide-bonded. A helical membrane pass occupies residues 419–442 (NTVWTIGYWLCYINSTINPACYAL). The Important for signaling motif lies at 436–440 (NPACY). At 443-466 (CNATFKKTFKHLLMCHYKNIGATR) the chain is on the cytoplasmic side. 3 positions are modified to phosphothreonine: T446, T450, and T465.

It belongs to the G-protein coupled receptor 1 family. Muscarinic acetylcholine receptor subfamily. CHRM2 sub-subfamily. As to quaternary structure, interacts with ARRB1 and ARRB2. Interacts with RACK1; the interaction regulates CHRM2 internalization. Post-translationally, phosphorylated in response to agonist treatment.

It localises to the cell membrane. The protein localises to the postsynaptic cell membrane. Its function is as follows. The muscarinic acetylcholine receptor mediates various cellular responses, including inhibition of adenylate cyclase, breakdown of phosphoinositides and modulation of potassium channels through the action of G proteins. Primary transducing effect is adenylate cyclase inhibition. Signaling promotes phospholipase C activity, leading to the release of inositol trisphosphate (IP3); this then triggers calcium ion release into the cytosol. The chain is Muscarinic acetylcholine receptor M2 (Chrm2) from Mus musculus (Mouse).